A 1142-amino-acid polypeptide reads, in one-letter code: Serine/threonine-protein kinase GIN4 (1142 aa).

In terms of domain architecture, Protein kinase spans 19-289; that stretch reads WKLGETLGLG…TRDILKHPLL (271 aa). ATP contacts are provided by residues 25-33 and Lys-48; that span reads LGLGSTGKV. Asp-156 serves as the catalytic Proton acceptor. Disordered stretches follow at residues 378–412 and 425–469; these read KKRQSISSVSVSPSKKVSTTPQRRRNRESLISVTS and ASSA…RNKR. Positions 382 to 395 are enriched in low complexity; sequence SISSVSVSPSKKVS. Ser-406 is modified (phosphoserine). Over residues 425 to 440 the composition is skewed to low complexity; the sequence is ASSASSSNLTTPGSSK. Residues 441-452 show a composition bias toward basic residues; sequence RLSKNFSSKKKL. A compositionally biased stretch (polar residues) spans 454 to 465; that stretch reads TIVNQSSPTPAS. Ser-465, Ser-471, Ser-617, Ser-689, Ser-719, Ser-805, Ser-807, and Ser-883 each carry phosphoserine. The segment at 676 to 698 is disordered; the sequence is DPGIMFSSPTEEVSPVEPKRTEN. Phosphothreonine is present on Thr-884. Residues 903–1031 form a disordered region; sequence NEAKQTDNLH…NTAIGNGSFF (129 aa). 3 stretches are compositionally biased toward basic and acidic residues: residues 923 to 937, 962 to 984, and 996 to 1021; these read NELRKQNSQEGDQAH, KEEKKPEQHKQEEDQEKREKVVD, and KIREKNAGSQAKDHSKDHLKEHKQDK. The residue at position 930 (Ser-930) is a Phosphoserine.

It belongs to the protein kinase superfamily. CAMK Ser/Thr protein kinase family. NIM1 subfamily. In terms of assembly, component of the GIN4 complex composed of at least BNI5, CDC3, CDC10, CDC11, CDC12, GIN4, NAP1 and SHS1 which forms a ring at the bud neck.

It localises to the cytoplasm. The protein resides in the bud neck. The enzyme catalyses L-seryl-[protein] + ATP = O-phospho-L-seryl-[protein] + ADP + H(+). It catalyses the reaction L-threonyl-[protein] + ATP = O-phospho-L-threonyl-[protein] + ADP + H(+). Its function is as follows. Serine/threonine-protein kinase which regulates the localization and the function of the septins during mitosis. Phosphorylates SHS1. This Saccharomyces cerevisiae (strain ATCC 204508 / S288c) (Baker's yeast) protein is Serine/threonine-protein kinase GIN4 (GIN4).